A 329-amino-acid chain; its full sequence is 4-hydroxythreonine-4-phosphate dehydrogenase (329 aa).

Substrate-binding residues include His136 and Thr137. A divalent metal cation-binding residues include His166, His211, and His266. Residues Lys274, Asn283, and Arg292 each coordinate substrate.

It belongs to the PdxA family. In terms of assembly, homodimer. The cofactor is Zn(2+). Mg(2+) serves as cofactor. Requires Co(2+) as cofactor.

Its subcellular location is the cytoplasm. The catalysed reaction is 4-(phosphooxy)-L-threonine + NAD(+) = 3-amino-2-oxopropyl phosphate + CO2 + NADH. Its pathway is cofactor biosynthesis; pyridoxine 5'-phosphate biosynthesis; pyridoxine 5'-phosphate from D-erythrose 4-phosphate: step 4/5. In terms of biological role, catalyzes the NAD(P)-dependent oxidation of 4-(phosphooxy)-L-threonine (HTP) into 2-amino-3-oxo-4-(phosphooxy)butyric acid which spontaneously decarboxylates to form 3-amino-2-oxopropyl phosphate (AHAP). The polypeptide is 4-hydroxythreonine-4-phosphate dehydrogenase (Shigella boydii serotype 18 (strain CDC 3083-94 / BS512)).